Reading from the N-terminus, the 44-residue chain is Photosystem I reaction center subunit IX (44 aa).

The chain crosses the membrane as a helical span at residues 7 to 27 (YLSVAPVLSTLWFGSLAGLLI).

The protein belongs to the PsaJ family.

It localises to the plastid. Its subcellular location is the chloroplast thylakoid membrane. Functionally, may help in the organization of the PsaE and PsaF subunits. In Arabis hirsuta (Hairy rock-cress), this protein is Photosystem I reaction center subunit IX.